Consider the following 150-residue polypeptide: D-aminoacyl-tRNA deacylase (150 aa).

Positions 138-139 match the Gly-cisPro motif, important for rejection of L-amino acids motif; it reads GP.

Belongs to the DTD family. As to quaternary structure, homodimer.

It is found in the cytoplasm. It carries out the reaction glycyl-tRNA(Ala) + H2O = tRNA(Ala) + glycine + H(+). The enzyme catalyses a D-aminoacyl-tRNA + H2O = a tRNA + a D-alpha-amino acid + H(+). In terms of biological role, an aminoacyl-tRNA editing enzyme that deacylates mischarged D-aminoacyl-tRNAs. Also deacylates mischarged glycyl-tRNA(Ala), protecting cells against glycine mischarging by AlaRS. Acts via tRNA-based rather than protein-based catalysis; rejects L-amino acids rather than detecting D-amino acids in the active site. By recycling D-aminoacyl-tRNA to D-amino acids and free tRNA molecules, this enzyme counteracts the toxicity associated with the formation of D-aminoacyl-tRNA entities in vivo and helps enforce protein L-homochirality. The sequence is that of D-aminoacyl-tRNA deacylase from Thermosipho melanesiensis (strain DSM 12029 / CIP 104789 / BI429).